We begin with the raw amino-acid sequence, 64 residues long: Large ribosomal subunit protein uL29 (64 aa).

The protein belongs to the universal ribosomal protein uL29 family.

The protein is Large ribosomal subunit protein uL29 of Teredinibacter turnerae (strain ATCC 39867 / T7901).